A 201-amino-acid polypeptide reads, in one-letter code: NADH-ubiquinone oxidoreductase chain 6 (201 aa).

5 helical membrane-spanning segments follow: residues 4 to 24 (LVLF…VISV), 28 to 48 (VFSV…LLLL), 55 to 75 (LLFL…VVMI), 88 to 108 (FYYA…IFII), and 151 to 171 (LFIL…ILTL).

The protein belongs to the complex I subunit 6 family.

Its subcellular location is the mitochondrion membrane. It carries out the reaction a ubiquinone + NADH + 5 H(+)(in) = a ubiquinol + NAD(+) + 4 H(+)(out). Its function is as follows. Core subunit of the mitochondrial membrane respiratory chain NADH dehydrogenase (Complex I) that is believed to belong to the minimal assembly required for catalysis. Complex I functions in the transfer of electrons from NADH to the respiratory chain. The immediate electron acceptor for the enzyme is believed to be ubiquinone. In Cyanidium caldarium (Red alga), this protein is NADH-ubiquinone oxidoreductase chain 6 (ND6).